Reading from the N-terminus, the 349-residue chain is Holliday junction branch migration complex subunit RuvB (349 aa).

Residues methionine 1–tyrosine 183 are large ATPase domain (RuvB-L). Residues leucine 22, arginine 23, glycine 64, lysine 67, threonine 68, threonine 69, glutamate 130–phenylalanine 132, arginine 173, tyrosine 183, and arginine 220 each bind ATP. Position 68 (threonine 68) interacts with Mg(2+). Positions threonine 184–glutamate 254 are small ATPAse domain (RuvB-S). Positions serine 257–glutamate 349 are head domain (RuvB-H). Residues arginine 293, arginine 312, and arginine 317 each coordinate DNA.

The protein belongs to the RuvB family. As to quaternary structure, homohexamer. Forms an RuvA(8)-RuvB(12)-Holliday junction (HJ) complex. HJ DNA is sandwiched between 2 RuvA tetramers; dsDNA enters through RuvA and exits via RuvB. An RuvB hexamer assembles on each DNA strand where it exits the tetramer. Each RuvB hexamer is contacted by two RuvA subunits (via domain III) on 2 adjacent RuvB subunits; this complex drives branch migration. In the full resolvosome a probable DNA-RuvA(4)-RuvB(12)-RuvC(2) complex forms which resolves the HJ.

The protein localises to the cytoplasm. It catalyses the reaction ATP + H2O = ADP + phosphate + H(+). In terms of biological role, the RuvA-RuvB-RuvC complex processes Holliday junction (HJ) DNA during genetic recombination and DNA repair, while the RuvA-RuvB complex plays an important role in the rescue of blocked DNA replication forks via replication fork reversal (RFR). RuvA specifically binds to HJ cruciform DNA, conferring on it an open structure. The RuvB hexamer acts as an ATP-dependent pump, pulling dsDNA into and through the RuvAB complex. RuvB forms 2 homohexamers on either side of HJ DNA bound by 1 or 2 RuvA tetramers; 4 subunits per hexamer contact DNA at a time. Coordinated motions by a converter formed by DNA-disengaged RuvB subunits stimulates ATP hydrolysis and nucleotide exchange. Immobilization of the converter enables RuvB to convert the ATP-contained energy into a lever motion, pulling 2 nucleotides of DNA out of the RuvA tetramer per ATP hydrolyzed, thus driving DNA branch migration. The RuvB motors rotate together with the DNA substrate, which together with the progressing nucleotide cycle form the mechanistic basis for DNA recombination by continuous HJ branch migration. Branch migration allows RuvC to scan DNA until it finds its consensus sequence, where it cleaves and resolves cruciform DNA. This Rhodopseudomonas palustris (strain TIE-1) protein is Holliday junction branch migration complex subunit RuvB.